The chain runs to 112 residues: MPVDWFGYVYAATVAAGGIMGYAKAGSIPSLGAGLAFGALLGYGAHLNSQDTPRPLLQLGTSLFLAGLMGARWNRSGKLMPAGMVCMLSVAALVKNLATYNRYLMPAGTKAP.

Residues 3–23 form a helical membrane-spanning segment; that stretch reads VDWFGYVYAATVAAGGIMGYA.

Belongs to the TMEM14 family.

It is found in the membrane. The sequence is that of Transmembrane protein 14 homolog from Drosophila melanogaster (Fruit fly).